A 285-amino-acid chain; its full sequence is Golgi phosphoprotein 3-like (285 aa).

The interval 1-43 (MTTLTHRTRRTEVSKSSEKKIESEEDTNQERSPDNEDPGDSKD) is disordered. Basic and acidic residues predominate over residues 10–43 (RTEVSKSSEKKIESEEDTNQERSPDNEDPGDSKD). A 1,2-diacyl-sn-glycero-3-phospho-(1D-myo-inositol 4-phosphate)-binding residues include tryptophan 67 and arginine 76. At serine 112 the chain carries Phosphoserine. A 1,2-diacyl-sn-glycero-3-phospho-(1D-myo-inositol 4-phosphate) is bound by residues arginine 157 and arginine 160. Positions 176 to 187 (EKQNFLLFDMTT) are beta-hairpin required for oligomerization.

It belongs to the GOLPH3/VPS74 family. Homooligomer. Does not interact MYO18; differs from GOLPH3 by its inability to interact with MYO18. May interact with ARF1. Expressed in a subset of tissues tested with higher expression in salivary gland, small intestine and skin (at protein level).

The protein resides in the golgi apparatus. It localises to the golgi stack membrane. It is found in the trans-Golgi network membrane. Phosphatidylinositol-4-phosphate-binding protein that may antagonize the action of GOLPH3 which is required for the process of vesicle budding at the Golgi and anterograde transport to the plasma membrane. The polypeptide is Golgi phosphoprotein 3-like (Golph3l) (Mus musculus (Mouse)).